The following is a 141-amino-acid chain: Hemoglobin subunit alpha-A (141 aa).

In terms of domain architecture, Globin spans 1–141 (VLSSGDKANV…VSTVLTSKYR (141 aa)). His58 contributes to the O2 binding site. His87 contacts heme b.

It belongs to the globin family. As to quaternary structure, heterotetramer of two alpha chains and two beta chains. Red blood cells.

Its function is as follows. Involved in oxygen transport from the lung to the various peripheral tissues. The protein is Hemoglobin subunit alpha-A (HBAA) of Caretta caretta (Loggerhead sea turtle).